Here is a 145-residue protein sequence, read N- to C-terminus: 3-hydroxyacyl-[acyl-carrier-protein] dehydratase FabZ (145 aa).

Residue H49 is part of the active site.

It belongs to the thioester dehydratase family. FabZ subfamily.

The protein localises to the cytoplasm. It catalyses the reaction a (3R)-hydroxyacyl-[ACP] = a (2E)-enoyl-[ACP] + H2O. Functionally, involved in unsaturated fatty acids biosynthesis. Catalyzes the dehydration of short chain beta-hydroxyacyl-ACPs and long chain saturated and unsaturated beta-hydroxyacyl-ACPs. The protein is 3-hydroxyacyl-[acyl-carrier-protein] dehydratase FabZ of Rickettsia felis (strain ATCC VR-1525 / URRWXCal2) (Rickettsia azadi).